The chain runs to 470 residues: Putative multidrug resistance protein MdtD (470 aa).

Over 1–11 (MTELPDNTRWQ) the chain is Periplasmic. A helical membrane pass occupies residues 12 to 32 (LWIVALGFFMQSLDTTIVNTA). Residues 33–48 (LPSMAKSLGESPLHMH) lie on the Cytoplasmic side of the membrane. A helical membrane pass occupies residues 49–69 (MVVVSYVLTVAVMLPASGWLA). The Periplasmic portion of the chain corresponds to 70 to 76 (DKIGVRN). Residues 77–97 (IFFAAIVLFTLGSLFCALSGT) traverse the membrane as a helical segment. Over 98 to 101 (LNQL) the chain is Cytoplasmic. Residues 102–124 (VLARVLQGVGGAMMVPVGRLTVM) form a helical membrane-spanning segment. Topologically, residues 125-137 (KIVPRAQYMAAMT) are periplasmic. Residues 138–158 (FVTLPGQIGPLLGPALGGVLV) traverse the membrane as a helical segment. The Cytoplasmic segment spans residues 159-164 (EYASWH). The chain crosses the membrane as a helical span at residues 165–185 (WIFLINIPVGIVGAMATFMLM). Residues 186–196 (PNYTIETRRFD) are Periplasmic-facing. Residues 197-217 (LPGFLLLAIGMAVLTLALDGS) traverse the membrane as a helical segment. Topologically, residues 218–221 (KSMG) are cytoplasmic. A helical membrane pass occupies residues 222–242 (ISPWTLAGLAAGGAAAILLYL). The Periplasmic portion of the chain corresponds to 243 to 262 (LHAKKNSGALFSLRLFCTPT). Residues 263-283 (FSLGLLGSFAGRIGSGMLPFM) form a helical membrane-spanning segment. Topologically, residues 284–285 (TP) are cytoplasmic. A helical membrane pass occupies residues 286-306 (VFLQIGLGFSPFHAGLMMIPM). Residues 307-341 (VLGSMGMKRIVVQIVNRFGYRRVLVATTLGLALVS) lie on the Periplasmic side of the membrane. Residues 342–362 (LLFMSVALLGWYYLLPLVLLL) traverse the membrane as a helical segment. Residues 363–395 (QGMVNSARFSSMNTLTLKDLPDTLASSGNSLLS) lie on the Cytoplasmic side of the membrane. The helical transmembrane segment at 396–416 (MIMQLSMSIGVTIAGMLLGMF) threads the bilayer. Residues 417–430 (GQQHIGIDSSATHH) are Periplasmic-facing. A helical membrane pass occupies residues 431 to 451 (VFMYTWLCMAVIIALPAIIFA). Residues 452-470 (RVPNDTQQNMVISRRKRSL) lie on the Cytoplasmic side of the membrane.

It belongs to the major facilitator superfamily. TCR/Tet family.

It is found in the cell inner membrane. This Salmonella paratyphi B (strain ATCC BAA-1250 / SPB7) protein is Putative multidrug resistance protein MdtD.